A 227-amino-acid polypeptide reads, in one-letter code: MKFAVIVFPGSNCDVDMFHAIKDELGEDVDYVWHDAENLDEYDAILLPGGFSYGDYLRCGAISRFANAMKAVQKAAEQGKPILGVCNGFQILVESGLLPGVLIRNQNLKFMCRTVPLRVENNETMFTSQYNKGEIIHIPIAHGEGNYYCDEATLKKLEQKNQIVFRYVDNPNGSVSDIAGIVNEKGNVLGMMPHPERAVNEILGGAEGLKVFQSILKYWRETYVVNA.

One can recognise a Glutamine amidotransferase type-1 domain in the interval 3 to 225 (FAVIVFPGSN…LKYWRETYVV (223 aa)). Cys-86 functions as the Nucleophile in the catalytic mechanism. Active-site residues include His-194 and Glu-196.

In terms of assembly, part of the FGAM synthase complex composed of 1 PurL, 1 PurQ and 2 PurS subunits.

It localises to the cytoplasm. The catalysed reaction is N(2)-formyl-N(1)-(5-phospho-beta-D-ribosyl)glycinamide + L-glutamine + ATP + H2O = 2-formamido-N(1)-(5-O-phospho-beta-D-ribosyl)acetamidine + L-glutamate + ADP + phosphate + H(+). The enzyme catalyses L-glutamine + H2O = L-glutamate + NH4(+). It participates in purine metabolism; IMP biosynthesis via de novo pathway; 5-amino-1-(5-phospho-D-ribosyl)imidazole from N(2)-formyl-N(1)-(5-phospho-D-ribosyl)glycinamide: step 1/2. Functionally, part of the phosphoribosylformylglycinamidine synthase complex involved in the purines biosynthetic pathway. Catalyzes the ATP-dependent conversion of formylglycinamide ribonucleotide (FGAR) and glutamine to yield formylglycinamidine ribonucleotide (FGAM) and glutamate. The FGAM synthase complex is composed of three subunits. PurQ produces an ammonia molecule by converting glutamine to glutamate. PurL transfers the ammonia molecule to FGAR to form FGAM in an ATP-dependent manner. PurS interacts with PurQ and PurL and is thought to assist in the transfer of the ammonia molecule from PurQ to PurL. The sequence is that of Phosphoribosylformylglycinamidine synthase subunit PurQ from Bacillus cytotoxicus (strain DSM 22905 / CIP 110041 / 391-98 / NVH 391-98).